The sequence spans 184 residues: Peptidoglycan-recognition protein SC2 (184 aa).

Positions 1–20 (MANKALILLAVLFCAQAVLG) are cleaved as a signal peptide. The N-acetylmuramoyl-L-alanine amidase domain occupies 45 to 169 (SYAVIHHTAG…RQVGSTECPG (125 aa)). H50 provides a ligand contact to Zn(2+). The cysteines at positions 57 and 63 are disulfide-linked. The Zn(2+) site is built by H159 and C167.

It belongs to the N-acetylmuramoyl-L-alanine amidase 2 family. Zn(2+) serves as cofactor.

It localises to the secreted. It carries out the reaction Hydrolyzes the link between N-acetylmuramoyl residues and L-amino acid residues in certain cell-wall glycopeptides.. In terms of biological role, N-acetylmuramyl-L-alanine amidase involved in innate immunity by degrading bacterial peptidoglycans (PGN). Probably plays a scavenger role by digesting biologically active PGN into biologically inactive fragments. Has no direct bacteriolytic activity. This chain is Peptidoglycan-recognition protein SC2 (PGRP-SC2), found in Drosophila simulans (Fruit fly).